We begin with the raw amino-acid sequence, 328 residues long: Ubiquitin carboxyl-terminal hydrolase isozyme L5 (328 aa).

The 219-residue stretch at 7–225 (EWCLMESDPG…IRFNLMAIVS (219 aa)) folds into the UCH catalytic domain. At Lys-47 the chain carries N6-succinyllysine. The Nucleophile role is filled by Cys-88. N6-acetyllysine is present on Lys-158. The active-site Proton donor is His-164. N6-succinyllysine is present on Lys-288. The ULD domain maps to 290–318 (NYLPFIMELLKTLAEHQQLIPLVEKAKEK). The segment at 312 to 328 (VEKAKEKQNAKKAQETK) is interaction with ADRM1.

Belongs to the peptidase C12 family. Component of the 19S (PA700) regulatory complex of the 26S proteasome. Interacts with ADRM1 and NFRKB. Component of the INO80 complex; specifically part of a complex module associated with N-terminus of INO80.

It localises to the cytoplasm. The protein resides in the nucleus. It catalyses the reaction Thiol-dependent hydrolysis of ester, thioester, amide, peptide and isopeptide bonds formed by the C-terminal Gly of ubiquitin (a 76-residue protein attached to proteins as an intracellular targeting signal).. Its activity is regulated as follows. Activated by ADRM1. Inhibited by interaction with NFRKB. Functionally, protease that specifically cleaves 'Lys-48'-linked polyubiquitin chains. Deubiquitinating enzyme associated with the 19S regulatory subunit of the 26S proteasome. Putative regulatory component of the INO80 complex; however is inactive in the INO80 complex and is activated by a transient interaction of the INO80 complex with the proteasome via ADRM1. The protein is Ubiquitin carboxyl-terminal hydrolase isozyme L5 (UCHL5) of Bos taurus (Bovine).